A 132-amino-acid chain; its full sequence is uncharacterized protein (132 aa).

A disordered region spans residues 1–68; it reads MCSAGELLRG…HTGEPVGDDY (68 aa). The chain crosses the membrane as a helical span at residues 100-120; sequence VIVIFFWVMLWFLGLQALGLV.

Belongs to the FAM241 family.

It localises to the membrane. This is an uncharacterized protein from Homo sapiens (Human).